The following is a 312-amino-acid chain: Methionyl-tRNA formyltransferase (312 aa).

A (6S)-5,6,7,8-tetrahydrofolate-binding site is contributed by 113-116; that stretch reads SILP.

The protein belongs to the Fmt family.

It catalyses the reaction L-methionyl-tRNA(fMet) + (6R)-10-formyltetrahydrofolate = N-formyl-L-methionyl-tRNA(fMet) + (6S)-5,6,7,8-tetrahydrofolate + H(+). In terms of biological role, attaches a formyl group to the free amino group of methionyl-tRNA(fMet). The formyl group appears to play a dual role in the initiator identity of N-formylmethionyl-tRNA by promoting its recognition by IF2 and preventing the misappropriation of this tRNA by the elongation apparatus. The polypeptide is Methionyl-tRNA formyltransferase (Hydrogenovibrio crunogenus (strain DSM 25203 / XCL-2) (Thiomicrospira crunogena)).